The sequence spans 410 residues: Regulator of microtubule dynamics protein 2 (410 aa).

A helical transmembrane segment spans residues 9–28; it reads LILGIMAGTAGISLLAFWYH. Serine 51 bears the Phosphoserine mark. Residues 69–110 adopt a coiled-coil conformation; sequence QRRQLQILEKLNELLTNMEELKEEIRFLKETIPKLEECIQDE. A disordered region spans residues 120 to 151; it reads ISPQHRARKKKGTTVQRSATSNSSEEAESEGG. Phosphoserine is present on serine 121. Basic residues predominate over residues 121 to 131; the sequence is SPQHRARKKKG. A Phosphothreonine modification is found at threonine 139. Position 152 is a phosphotyrosine (tyrosine 152). 2 positions are modified to phosphothreonine: threonine 154 and threonine 157.

Belongs to the RMDN family. In terms of assembly, interacts with microtubules.

It localises to the membrane. The protein localises to the cytoplasm. The protein resides in the cytoskeleton. Its subcellular location is the spindle. It is found in the spindle pole. The sequence is that of Regulator of microtubule dynamics protein 2 (Rmdn2) from Mus musculus (Mouse).